The primary structure comprises 521 residues: MSPALYASTFKCEVDENPSLMGSYYASLYPNLPILENSATSTWILNPFSDHETETIRDHKKLKRSTVTIPIWFANFSSHSNSFFNNINSNNNSVNSIPRLHFRDHIRTYKQRYFASEAVEEAAEDNFNYNNCEAEEDGSCADGMRLVQLLIACAEAVACRDKSHASVLLSELKSNALVFGSSFQRVASCFVQGLTERLTLIQPIGNNSAGSDTKSMMNIMDAASEEMEEAFKLVYENCPHIQFGHFVANSIILEAFEGESFLHVVDLGMSLGLPHGHQWRGLIQSLADRSSHRVRRLRITAIGLCIARIQVIGEELSIYAKNLGIHLEFSIVEKNLENLKPKDIKVNEKEVLVVNSILQLHCVVKESRGALNAVLQMIHGLSPKVLVMAEQDSGHNGPFFLGRFMESLHYYSAIFDSLDAMLPKYDTKRAKMEQFYFAEEIKNIVSCEGPLRMERHEKVDQWRRRMSRAGFQGSPIKMVVQAKQWLVKNNVCDGYTVVEEKGCLVLGWKSKPIVAVSCWKC.

The 384-residue stretch at 137–520 (DGSCADGMRL…KPIVAVSCWK (384 aa)) folds into the GRAS domain. A leucine repeat I (LRI) region spans residues 144 to 212 (MRLVQLLIAC…PIGNNSAGSD (69 aa)). The segment at 231 to 301 (FKLVYENCPH…HRVRRLRITA (71 aa)) is VHIID. The VHIID signature appears at 262–266 (LHVVD). The interval 311 to 343 (VIGEELSIYAKNLGIHLEFSIVEKNLENLKPKD) is leucine repeat II (LRII). Residues 352–443 (LVVNSILQLH…QFYFAEEIKN (92 aa)) form a PFYRE region. The tract at residues 446-520 (SCEGPLRMER…KPIVAVSCWK (75 aa)) is SAW.

Belongs to the GRAS family. As to quaternary structure, interacts with RAM1. Interacts with NSP2.

It localises to the nucleus. Transcription factor acting as a regulator of arbuscular mycorrhiza (AM)-related genes (e.g. STR). Required for the morphogenesis of arbuscules upon symbiosis with AM fungi (e.g. Glomus versiforme). Also involved in restricting mycorrhizal colonization of the root meristem. The chain is GRAS family protein RAD1 from Medicago truncatula (Barrel medic).